Reading from the N-terminus, the 50-residue chain is Putative protein HokF (50 aa).

The helical transmembrane segment at 5–25 threads the bilayer; that stretch reads YALVAVIVLCLTVPGFTLLVG.

Belongs to the Hok/Gef family.

It localises to the cell inner membrane. In terms of biological role, toxic component of a type I toxin-antitoxin (TA) system. When overexpressed kills cells within minutes; causes collapse of the transmembrane potential and arrest of respiration. Its toxic effect is probably neutralized by an antisense antitoxin Sok RNA. The chain is Putative protein HokF (hokF) from Escherichia coli O157:H7.